An 87-amino-acid chain; its full sequence is Colicin-E7 immunity protein (87 aa).

It belongs to the colicins ColE2/ColE8/ColE9 and pyocins S1/S2 family.

This protein is able to protect a cell, which harbors the plasmid ColE7 encoding colicin E7, against colicin E7, it binds specifically to the DNase-type colicin and inhibits its bactericidal activity. Dimeric ImmE7 may possess a RNase activity that cleaves its own mRNA at a specific site and thus autoregulates translational expression of the downstream ceiE7 gene as well as degradation of the upstream ceaE7 mRNA. This chain is Colicin-E7 immunity protein (imm), found in Escherichia coli.